A 219-amino-acid chain; its full sequence is Large ribosomal subunit protein uL3 (219 aa).

Residues 113-142 are disordered; that stretch reads TTKGHGYQGNIHKDNQSRGPMAHGSRYHRR.

Belongs to the universal ribosomal protein uL3 family. As to quaternary structure, part of the 50S ribosomal subunit. Forms a cluster with proteins L14 and L19.

One of the primary rRNA binding proteins, it binds directly near the 3'-end of the 23S rRNA, where it nucleates assembly of the 50S subunit. The sequence is that of Large ribosomal subunit protein uL3 from Limosilactobacillus reuteri (strain DSM 20016) (Lactobacillus reuteri).